A 166-amino-acid chain; its full sequence is Interferon gamma (166 aa).

Positions 1–23 (MKYTSYILAFQLCIVLGSLGCYC) are cleaved as a signal peptide. Pyrrolidone carboxylic acid is present on Gln-24. A glycan (N-linked (GlcNAc...) asparagine) is linked at Asn-48. Asn-120 carries N-linked (GlcNAc...) asparagine; in dimeric form glycosylation. Positions 147–166 (AKTGKRKRSQMLFRGRRASQ) are disordered. The segment covering 149–166 (TGKRKRSQMLFRGRRASQ) has biased composition (basic residues). A propeptide spanning residues 162 to 166 (RRASQ) is cleaved from the precursor.

It belongs to the type II (or gamma) interferon family. As to quaternary structure, homodimer. Interacts with IFNGR1 (via extracellular domain); this interaction promotes IFNGR1 dimerization. Proteolytic processing produces C-terminal heterogeneity, with proteins ending alternatively at Gly-150, Met-157 or Gly-161. As to expression, released primarily from activated T lymphocytes.

The protein localises to the secreted. Functionally, type II interferon produced by immune cells such as T-cells and NK cells that plays crucial roles in antimicrobial, antiviral, and antitumor responses by activating effector immune cells and enhancing antigen presentation. Primarily signals through the JAK-STAT pathway after interaction with its receptor IFNGR1 to affect gene regulation. Upon IFNG binding, IFNGR1 intracellular domain opens out to allow association of downstream signaling components JAK2, JAK1 and STAT1, leading to STAT1 activation, nuclear translocation and transcription of IFNG-regulated genes. Many of the induced genes are transcription factors such as IRF1 that are able to further drive regulation of a next wave of transcription. Plays a role in class I antigen presentation pathway by inducing a replacement of catalytic proteasome subunits with immunoproteasome subunits. In turn, increases the quantity, quality, and repertoire of peptides for class I MHC loading. Increases the efficiency of peptide generation also by inducing the expression of activator PA28 that associates with the proteasome and alters its proteolytic cleavage preference. Up-regulates as well MHC II complexes on the cell surface by promoting expression of several key molecules such as cathepsins B/CTSB, H/CTSH, and L/CTSL. Participates in the regulation of hematopoietic stem cells during development and under homeostatic conditions by affecting their development, quiescence, and differentiation. This Homo sapiens (Human) protein is Interferon gamma (IFNG).